Consider the following 243-residue polypeptide: Ice-binding protein K1-A (243 aa).

The first 20 residues, 1–20, serve as a signal peptide directing secretion; that stretch reads MFSSTYLLAIIALAVSSVFA.

It belongs to the ice-binding protein family.

The protein resides in the secreted. In terms of biological role, binds to the surface of ice crystals. Inhibits growth of the ice crystals. Has antifreeze activity for survival under snow cover. Has high thermal hysteresis (TH) activity, which is the ability to lower the freezing point of an aqueous solution below its melting point, and thus the freezing of the cell fluid can be prevented protecting the organism from ice damage. The TH activity of this protein is 2.0 degrees Celsius at 0.11 mM. The protein is Ice-binding protein K1-A of Typhula ishikariensis (Gray snow mold fungus).